The sequence spans 304 residues: Energy-coupling factor transporter ATP-binding protein EcfA2 (304 aa).

In terms of domain architecture, ABC transporter spans 3–261; the sequence is IIVKNISYIY…EKFLVENKLK (259 aa). Residue 40 to 47 coordinates ATP; the sequence is GSTGSGKT.

This sequence belongs to the ABC transporter superfamily. Energy-coupling factor EcfA family. Forms a stable energy-coupling factor (ECF) transporter complex composed of 2 membrane-embedded substrate-binding proteins (S component), 2 ATP-binding proteins (A component) and 2 transmembrane proteins (T component).

It localises to the cell membrane. Its function is as follows. ATP-binding (A) component of a common energy-coupling factor (ECF) ABC-transporter complex. Unlike classic ABC transporters this ECF transporter provides the energy necessary to transport a number of different substrates. The protein is Energy-coupling factor transporter ATP-binding protein EcfA2 of Mycoplasmopsis pulmonis (strain UAB CTIP) (Mycoplasma pulmonis).